Here is a 223-residue protein sequence, read N- to C-terminus: Phosphoribosylformylglycinamidine synthase subunit PurQ (223 aa).

The Glutamine amidotransferase type-1 domain maps to 3–223; the sequence is FAVLVFPGSN…MVNSWREQNV (221 aa). The active-site Nucleophile is cysteine 85. Residues histidine 193 and glutamate 195 contribute to the active site.

Part of the FGAM synthase complex composed of 1 PurL, 1 PurQ and 2 PurS subunits.

It is found in the cytoplasm. It catalyses the reaction N(2)-formyl-N(1)-(5-phospho-beta-D-ribosyl)glycinamide + L-glutamine + ATP + H2O = 2-formamido-N(1)-(5-O-phospho-beta-D-ribosyl)acetamidine + L-glutamate + ADP + phosphate + H(+). The enzyme catalyses L-glutamine + H2O = L-glutamate + NH4(+). Its pathway is purine metabolism; IMP biosynthesis via de novo pathway; 5-amino-1-(5-phospho-D-ribosyl)imidazole from N(2)-formyl-N(1)-(5-phospho-D-ribosyl)glycinamide: step 1/2. Functionally, part of the phosphoribosylformylglycinamidine synthase complex involved in the purines biosynthetic pathway. Catalyzes the ATP-dependent conversion of formylglycinamide ribonucleotide (FGAR) and glutamine to yield formylglycinamidine ribonucleotide (FGAM) and glutamate. The FGAM synthase complex is composed of three subunits. PurQ produces an ammonia molecule by converting glutamine to glutamate. PurL transfers the ammonia molecule to FGAR to form FGAM in an ATP-dependent manner. PurS interacts with PurQ and PurL and is thought to assist in the transfer of the ammonia molecule from PurQ to PurL. This chain is Phosphoribosylformylglycinamidine synthase subunit PurQ, found in Staphylococcus haemolyticus (strain JCSC1435).